Reading from the N-terminus, the 589-residue chain is Intermediate filament protein ifb-1 (589 aa).

Residues 1–42 form a disordered region; the sequence is MSSHKESSEYEMQYRSTIQPRTAVRSQSRQSGNYVSGGNGAG. The interval 8-84 is head; sequence SEYEMQYRST…LEATDKEKKT (77 aa). Over residues 14–30 the composition is skewed to polar residues; the sequence is YRSTIQPRTAVRSQSRQ. The 353-residue stretch at 81–433 folds into the IF rod domain; that stretch reads EKKTLQGLND…KMLEGEETRV (353 aa). A coil 1A region spans residues 85–116; that stretch reads LQGLNDRLGNYIDRVKKLEEQNRKLVADLDEL. The tract at residues 117–130 is linker 1; the sequence is RGKWGKDTSEIKIK. The segment at 131 to 268 is coil 1B; it reads YSESLSTARK…RVHEQEVKEL (138 aa). The tract at residues 269–285 is linker 12; sequence QALLAQAPADTREFFKN. A coil 2 region spans residues 286-433; that stretch reads ELALAIRDIK…KMLEGEETRV (148 aa). The segment at 434 to 588 is tail; it reads GLTQMVEQAV…THTQKTIQSG (155 aa). The segment at 444–470 is disordered; the sequence is KTHSLQQQENTDSTRSVRGEVSTKTTF. Residues 466-584 form the LTD domain; it reads TKTTFQRSAK…EERATHTQKT (119 aa).

It belongs to the intermediate filament family. As to quaternary structure, forms some heteromeric filaments with ifa-1, ifa-2, ifa-3 and probably ifa-4. In terms of tissue distribution, expressed in epidermal cells. Expressed in amphid sensory neurons, the excretory cells, the vulva, the uterus, the rectum and some neurons of the tail. Isoform a and isoform b display a similar pattern of expression. Isoform a is predominant in pharyngeal tonofilaments.

Its subcellular location is the cytoplasm. Functionally, cytoplasmic intermediate filaments provide mechanical strength to cells. Essential protein, involved in attachment structures in epidermal cells that connect muscles to the external cuticle. Required in morphogenesis and epidermal integrity. Probable component of embryonic epidermal attachment structures. Functions in larval muscle attachment independently of ifa-2. The protein is Intermediate filament protein ifb-1 (ifb-1) of Caenorhabditis elegans.